Consider the following 132-residue polypeptide: Pro-MCH 1 (132 aa).

The signal sequence occupies residues 1-24 (MRHYVLSISFAVALFLECYTPSTA). A disulfide bridge links C120 with C129.

This sequence belongs to the melanin-concentrating hormone family. As to expression, pituitary gland. Produced in neurons of lateral basal hypothalamus which project both to the brain and to the neural lobe of the pituitary gland from where MCH is released.

Its function is as follows. Plays a role in skin pigmentation by antagonizing the action of melanotropin alpha. Induces melanin concentration within the melanophores. May participate in the control of the hypothalamo-pituitary adrenal gland axis by inhibiting the release of ACTH. The polypeptide is Pro-MCH 1 (mch1) (Oncorhynchus keta (Chum salmon)).